A 282-amino-acid polypeptide reads, in one-letter code: Bifunctional protein FolD (282 aa).

Residues 164 to 166 (GRS) and Ser-189 contribute to the NADP(+) site.

Belongs to the tetrahydrofolate dehydrogenase/cyclohydrolase family. Homodimer.

The enzyme catalyses (6R)-5,10-methylene-5,6,7,8-tetrahydrofolate + NADP(+) = (6R)-5,10-methenyltetrahydrofolate + NADPH. It carries out the reaction (6R)-5,10-methenyltetrahydrofolate + H2O = (6R)-10-formyltetrahydrofolate + H(+). Its pathway is one-carbon metabolism; tetrahydrofolate interconversion. Catalyzes the oxidation of 5,10-methylenetetrahydrofolate to 5,10-methenyltetrahydrofolate and then the hydrolysis of 5,10-methenyltetrahydrofolate to 10-formyltetrahydrofolate. The sequence is that of Bifunctional protein FolD from Lactobacillus gasseri (strain ATCC 33323 / DSM 20243 / BCRC 14619 / CIP 102991 / JCM 1131 / KCTC 3163 / NCIMB 11718 / NCTC 13722 / AM63).